A 283-amino-acid polypeptide reads, in one-letter code: Pantothenate synthetase (283 aa).

34-41 is a binding site for ATP; that stretch reads MGALHDGH. H41 serves as the catalytic Proton donor. Q65 serves as a coordination point for (R)-pantoate. A beta-alanine-binding site is contributed by Q65. 152–155 serves as a coordination point for ATP; the sequence is GQKD. Position 158 (Q158) interacts with (R)-pantoate. Residues V181 and 189-192 each bind ATP; that span reads MSSR.

It belongs to the pantothenate synthetase family. As to quaternary structure, homodimer.

It is found in the cytoplasm. It carries out the reaction (R)-pantoate + beta-alanine + ATP = (R)-pantothenate + AMP + diphosphate + H(+). It functions in the pathway cofactor biosynthesis; (R)-pantothenate biosynthesis; (R)-pantothenate from (R)-pantoate and beta-alanine: step 1/1. Catalyzes the condensation of pantoate with beta-alanine in an ATP-dependent reaction via a pantoyl-adenylate intermediate. The chain is Pantothenate synthetase from Nitrobacter hamburgensis (strain DSM 10229 / NCIMB 13809 / X14).